The sequence spans 505 residues: ATP synthase subunit alpha (505 aa).

ATP is bound at residue 171-178 (GDRQTGKT).

It belongs to the ATPase alpha/beta chains family. In terms of assembly, F-type ATPases have 2 components, CF(1) - the catalytic core - and CF(0) - the membrane proton channel. CF(1) has five subunits: alpha(3), beta(3), gamma(1), delta(1), epsilon(1). CF(0) has three main subunits: a(1), b(2) and c(9-12). The alpha and beta chains form an alternating ring which encloses part of the gamma chain. CF(1) is attached to CF(0) by a central stalk formed by the gamma and epsilon chains, while a peripheral stalk is formed by the delta and b chains.

Its subcellular location is the cell inner membrane. It carries out the reaction ATP + H2O + 4 H(+)(in) = ADP + phosphate + 5 H(+)(out). Functionally, produces ATP from ADP in the presence of a proton gradient across the membrane. The alpha chain is a regulatory subunit. The sequence is that of ATP synthase subunit alpha from Campylobacter curvus (strain 525.92).